A 349-amino-acid chain; its full sequence is Isopentenyl-diphosphate delta-isomerase (349 aa).

R9–K10 contacts substrate. Residues A65 to T67, S95, and N124 contribute to the FMN site. Residue S95–H97 coordinates substrate. Q154 contributes to the substrate binding site. E155 is a Mg(2+) binding site. Residues K186, S211, T216, G262–R264, and S283–R284 contribute to the FMN site.

Belongs to the IPP isomerase type 2 family. Homooctamer. Dimer of tetramers. FMN serves as cofactor. Requires NADPH as cofactor. The cofactor is Mg(2+).

Its subcellular location is the cytoplasm. The catalysed reaction is isopentenyl diphosphate = dimethylallyl diphosphate. In terms of biological role, involved in the biosynthesis of isoprenoids. Catalyzes the 1,3-allylic rearrangement of the homoallylic substrate isopentenyl (IPP) to its allylic isomer, dimethylallyl diphosphate (DMAPP). The polypeptide is Isopentenyl-diphosphate delta-isomerase (Staphylococcus aureus).